Reading from the N-terminus, the 348-residue chain is Heat-inducible transcription repressor HrcA (348 aa).

Belongs to the HrcA family.

In terms of biological role, negative regulator of class I heat shock genes (grpE-dnaK-dnaJ and groELS operons). Prevents heat-shock induction of these operons. The chain is Heat-inducible transcription repressor HrcA from Chlorobium chlorochromatii (strain CaD3).